A 269-amino-acid polypeptide reads, in one-letter code: MANICANMKRCFSPPALRAYFAEFFSTFLFVFIAVGSTISARMLTPDETSDASSLMATAVAQAFGLFAAVFIAADVSGGHVNPAVTFAYAIGGHITVPSAIFYWASQMLGSTFACLVLHYISAGQAVPTTRIAVEMTGFGAGILEGVLTFMVVYTVHVAGDPRGGGFGGRKGPAATALGALVVGAVTGACVLAAGSLTGASMNPARSFGPAVVSGHYSNQAVYWAGPMVGAAVAALVHQALVFPTVPEPAPAPATNESARHGSVQTVVV.

The next 5 membrane-spanning stretches (helical) occupy residues 19–39 (AYFA…GSTI), 54–74 (SLMA…FIAA), 84–104 (AVTF…IFYW), 139–159 (FGAG…VHVA), and 177–197 (ALGA…AGSL). An NPA 1 motif is present at residues 82-84 (NPA). An NPA 2 motif is present at residues 203–205 (NPA). Residues 223–243 (YWAGPMVGAAVAALVHQALVF) form a helical membrane-spanning segment.

It belongs to the MIP/aquaporin (TC 1.A.8) family. TIP (TC 1.A.8.10) subfamily. As to expression, expressed in leaves and anthers, and at lower levels in roots.

Its subcellular location is the vacuole membrane. Functionally, aquaporins facilitate the transport of water and small neutral solutes across cell membranes. May be involved in transport from the vacuolar compartment to the cytoplasm. This Oryza sativa subsp. japonica (Rice) protein is Probable aquaporin TIP5-1 (TIP5;1).